Consider the following 361-residue polypeptide: tRNA-specific 2-thiouridylase MnmA (361 aa).

ATP-binding positions include 6-13 (AMSGGVDS) and Leu32. Cys101 functions as the Nucleophile in the catalytic mechanism. A disulfide bond links Cys101 and Cys194. Gly125 serves as a coordination point for ATP. The interval 144-146 (KDQ) is interaction with tRNA. The active-site Cysteine persulfide intermediate is Cys194.

It belongs to the MnmA/TRMU family.

The protein resides in the cytoplasm. The catalysed reaction is S-sulfanyl-L-cysteinyl-[protein] + uridine(34) in tRNA + AH2 + ATP = 2-thiouridine(34) in tRNA + L-cysteinyl-[protein] + A + AMP + diphosphate + H(+). In terms of biological role, catalyzes the 2-thiolation of uridine at the wobble position (U34) of tRNA, leading to the formation of s(2)U34. This Corynebacterium aurimucosum (strain ATCC 700975 / DSM 44827 / CIP 107346 / CN-1) (Corynebacterium nigricans) protein is tRNA-specific 2-thiouridylase MnmA.